Reading from the N-terminus, the 351-residue chain is Protein-glutamate methylesterase/protein-glutamine glutaminase 1 (351 aa).

The 115-residue stretch at 1–115 (MVDDSAVVRQ…KQFLTESADE (115 aa)) folds into the Response regulatory domain. 4-aspartylphosphate is present on D49. Residues 161 to 351 (AQTTERIVAI…MAREIVTQLQ (191 aa)) enclose the CheB-type methylesterase domain. Active-site residues include S173, H199, and D295.

The protein belongs to the CheB family. Post-translationally, phosphorylated by CheA. Phosphorylation of the N-terminal regulatory domain activates the methylesterase activity.

It is found in the cytoplasm. The enzyme catalyses [protein]-L-glutamate 5-O-methyl ester + H2O = L-glutamyl-[protein] + methanol + H(+). It catalyses the reaction L-glutaminyl-[protein] + H2O = L-glutamyl-[protein] + NH4(+). Involved in chemotaxis. Part of a chemotaxis signal transduction system that modulates chemotaxis in response to various stimuli. Catalyzes the demethylation of specific methylglutamate residues introduced into the chemoreceptors (methyl-accepting chemotaxis proteins or MCP) by CheR. Also mediates the irreversible deamidation of specific glutamine residues to glutamic acid. This Xanthomonas oryzae pv. oryzae (strain MAFF 311018) protein is Protein-glutamate methylesterase/protein-glutamine glutaminase 1.